The following is a 163-amino-acid chain: Crossover junction endodeoxyribonuclease RuvC (163 aa).

Catalysis depends on residues Asp7, Glu67, and Asp140. Asp7, Glu67, and Asp140 together coordinate Mg(2+).

This sequence belongs to the RuvC family. In terms of assembly, homodimer which binds Holliday junction (HJ) DNA. The HJ becomes 2-fold symmetrical on binding to RuvC with unstacked arms; it has a different conformation from HJ DNA in complex with RuvA. In the full resolvosome a probable DNA-RuvA(4)-RuvB(12)-RuvC(2) complex forms which resolves the HJ. It depends on Mg(2+) as a cofactor.

It is found in the cytoplasm. It carries out the reaction Endonucleolytic cleavage at a junction such as a reciprocal single-stranded crossover between two homologous DNA duplexes (Holliday junction).. In terms of biological role, the RuvA-RuvB-RuvC complex processes Holliday junction (HJ) DNA during genetic recombination and DNA repair. Endonuclease that resolves HJ intermediates. Cleaves cruciform DNA by making single-stranded nicks across the HJ at symmetrical positions within the homologous arms, yielding a 5'-phosphate and a 3'-hydroxyl group; requires a central core of homology in the junction. The consensus cleavage sequence is 5'-(A/T)TT(C/G)-3'. Cleavage occurs on the 3'-side of the TT dinucleotide at the point of strand exchange. HJ branch migration catalyzed by RuvA-RuvB allows RuvC to scan DNA until it finds its consensus sequence, where it cleaves and resolves the cruciform DNA. The chain is Crossover junction endodeoxyribonuclease RuvC from Desulforamulus reducens (strain ATCC BAA-1160 / DSM 100696 / MI-1) (Desulfotomaculum reducens).